A 509-amino-acid polypeptide reads, in one-letter code: Movement protein (509 aa).

It localises to the host cell junction. It is found in the host plasmodesma. Its subcellular location is the host cytoplasm. Transports viral genome to neighboring plant cells directly through plasmosdesmata, without any budding. The movement protein allows efficient cell to cell propagation, by bypassing the host cell wall barrier. This chain is Movement protein, found in Rice dwarf virus (isolate Fujian) (RDV).